The chain runs to 382 residues: MSKSDYYDLLGLSKNATPEEIKKAYRKMALKYHPDKNPGDKAAEEKFKELSEAYDVLIDKDKRAAYDRYGHSAFSDGSGRGGFDFNSGFSTDFSDIFNDLFGGGFRGGRSSSKRQDGGTVGSDLRLDIEITLEDSFNGTKVPINYVTHVKCSSCSGSGSEGSVKSVQCNTCHGAGNTRTQQGFFTIERTCHVCNGEGEIIKNKCKKCSGSGRVRDEVNLLVTVPKGIESGDKIRLNGKGEAGYRGAQSGDLYVYPNIKKHKFFTRNGADLYCNVPIKMILATLGGHIEMPSIDGTWTKVKVPEGSQNGDKLRLKEKGMPVINSSRRGDMYIQITVETPINLTKQQKELLKKFDEEPNTVECNPQSTGFFQKVKSFWNDIRSS.

Positions 5-70 constitute a J domain; it reads DYYDLLGLSK…DKRAAYDRYG (66 aa). The CR-type zinc finger occupies 138-216; the sequence is GTKVPINYVT…CSGSGRVRDE (79 aa). The Zn(2+) site is built by Cys151, Cys154, Cys168, Cys171, Cys190, Cys193, Cys204, and Cys207. CXXCXGXG motif repeat units follow at residues 151–158, 168–175, 190–197, and 204–211; these read CSSCSGSG, CNTCHGAG, CHVCNGEG, and CKKCSGSG.

Belongs to the DnaJ family. In terms of assembly, homodimer. It depends on Zn(2+) as a cofactor.

The protein resides in the cytoplasm. Its function is as follows. Participates actively in the response to hyperosmotic and heat shock by preventing the aggregation of stress-denatured proteins and by disaggregating proteins, also in an autonomous, DnaK-independent fashion. Unfolded proteins bind initially to DnaJ; upon interaction with the DnaJ-bound protein, DnaK hydrolyzes its bound ATP, resulting in the formation of a stable complex. GrpE releases ADP from DnaK; ATP binding to DnaK triggers the release of the substrate protein, thus completing the reaction cycle. Several rounds of ATP-dependent interactions between DnaJ, DnaK and GrpE are required for fully efficient folding. Also involved, together with DnaK and GrpE, in the DNA replication of plasmids through activation of initiation proteins. This chain is Chaperone protein DnaJ, found in Ehrlichia ruminantium (strain Gardel).